The sequence spans 164 residues: Xanthine-guanine phosphoribosyltransferase (164 aa).

5-phospho-alpha-D-ribose 1-diphosphate contacts are provided by residues 41–42 (RG) and 98–106 (DDLTDTGKT). Residue D99 participates in Mg(2+) binding. Guanine contacts are provided by D102 and I145. Residues D102 and I145 each contribute to the xanthine site. GMP-binding positions include 102 to 106 (DTGKT) and 144 to 145 (WI).

This sequence belongs to the purine/pyrimidine phosphoribosyltransferase family. XGPT subfamily. In terms of assembly, homotetramer. Requires Mg(2+) as cofactor.

The protein localises to the cell inner membrane. It catalyses the reaction GMP + diphosphate = guanine + 5-phospho-alpha-D-ribose 1-diphosphate. It carries out the reaction XMP + diphosphate = xanthine + 5-phospho-alpha-D-ribose 1-diphosphate. The enzyme catalyses IMP + diphosphate = hypoxanthine + 5-phospho-alpha-D-ribose 1-diphosphate. It participates in purine metabolism; GMP biosynthesis via salvage pathway; GMP from guanine: step 1/1. Its pathway is purine metabolism; XMP biosynthesis via salvage pathway; XMP from xanthine: step 1/1. Purine salvage pathway enzyme that catalyzes the transfer of the ribosyl-5-phosphate group from 5-phospho-alpha-D-ribose 1-diphosphate (PRPP) to the N9 position of the 6-oxopurines guanine and xanthine to form the corresponding ribonucleotides GMP (guanosine 5'-monophosphate) and XMP (xanthosine 5'-monophosphate), with the release of PPi. To a lesser extent, also acts on hypoxanthine. This chain is Xanthine-guanine phosphoribosyltransferase, found in Rhizobium johnstonii (strain DSM 114642 / LMG 32736 / 3841) (Rhizobium leguminosarum bv. viciae).